The sequence spans 245 residues: Probable phosphatase YpAngola_A2446 (245 aa).

Zn(2+)-binding residues include His-7, His-9, His-15, His-40, Glu-73, His-101, His-131, Asp-192, and His-194.

It belongs to the PHP family. As to quaternary structure, homotrimer. Requires Zn(2+) as cofactor.

The sequence is that of Probable phosphatase YpAngola_A2446 from Yersinia pestis bv. Antiqua (strain Angola).